Reading from the N-terminus, the 145-residue chain is uncharacterized protein (145 aa).

It belongs to the methyltransferase superfamily.

In terms of biological role, probable methyltransferase. This is an uncharacterized protein from Schizosaccharomyces pombe (strain 972 / ATCC 24843) (Fission yeast).